A 212-amino-acid chain; its full sequence is ATP phosphoribosyltransferase (212 aa).

Belongs to the ATP phosphoribosyltransferase family. Short subfamily. Heteromultimer composed of HisG and HisZ subunits.

It localises to the cytoplasm. The enzyme catalyses 1-(5-phospho-beta-D-ribosyl)-ATP + diphosphate = 5-phospho-alpha-D-ribose 1-diphosphate + ATP. It participates in amino-acid biosynthesis; L-histidine biosynthesis; L-histidine from 5-phospho-alpha-D-ribose 1-diphosphate: step 1/9. Functionally, catalyzes the condensation of ATP and 5-phosphoribose 1-diphosphate to form N'-(5'-phosphoribosyl)-ATP (PR-ATP). Has a crucial role in the pathway because the rate of histidine biosynthesis seems to be controlled primarily by regulation of HisG enzymatic activity. The chain is ATP phosphoribosyltransferase from Geobacter metallireducens (strain ATCC 53774 / DSM 7210 / GS-15).